The primary structure comprises 245 residues: tRNA1(Val) (adenine(37)-N6)-methyltransferase (245 aa).

It belongs to the methyltransferase superfamily. tRNA (adenine-N(6)-)-methyltransferase family.

The protein resides in the cytoplasm. It catalyses the reaction adenosine(37) in tRNA1(Val) + S-adenosyl-L-methionine = N(6)-methyladenosine(37) in tRNA1(Val) + S-adenosyl-L-homocysteine + H(+). In terms of biological role, specifically methylates the adenine in position 37 of tRNA(1)(Val) (anticodon cmo5UAC). The chain is tRNA1(Val) (adenine(37)-N6)-methyltransferase from Klebsiella pneumoniae subsp. pneumoniae (strain ATCC 700721 / MGH 78578).